Reading from the N-terminus, the 338-residue chain is Delta(9)-fatty-acid desaturase fat-7 (338 aa).

4 helical membrane-spanning segments follow: residues Val-51–His-71, Thr-76–His-96, Tyr-194–Trp-214, and Ala-218–Trp-238.

Belongs to the fatty acid desaturase type 1 family. As to expression, expressed in the intestine in adult worms and in all four larval stages.

The protein resides in the membrane. It catalyses the reaction octadecanoyl-CoA + 2 Fe(II)-[cytochrome b5] + O2 + 2 H(+) = (9Z)-octadecenoyl-CoA + 2 Fe(III)-[cytochrome b5] + 2 H2O. The enzyme catalyses hexadecanoyl-CoA + 2 Fe(II)-[cytochrome b5] + O2 + 2 H(+) = (9Z)-hexadecenoyl-CoA + 2 Fe(III)-[cytochrome b5] + 2 H2O. The catalysed reaction is heptadecanoyl-CoA + 2 Fe(II)-[cytochrome b5] + O2 + 2 H(+) = (9Z)-heptadecenoyl-CoA + 2 Fe(III)-[cytochrome b5] + 2 H2O. It carries out the reaction (11E)-octadecenoyl-CoA + 2 Fe(II)-[cytochrome b5] + O2 + 2 H(+) = (9Z,11E)-octadecadienoyl-CoA + 2 Fe(III)-[cytochrome b5] + 2 H2O. Its pathway is lipid metabolism; monounsaturated fatty acid biosynthesis. The protein operates within lipid metabolism; fatty acid metabolism. Delta(9)-fatty acid desaturase that acts preferentially on stearoyl-CoA (octadecanoyl-CoA) producing the monounsaturated oleoyl-CoA ((9Z)-octadecenoyl-CoA), one of the most abundant monounsaturated fatty acid in Caenorhabditis elegans phospholipids and triacylglycerols. Also acts on palmitoyl-CoA (hexadecanoyl-CoA), heptadecanoyl-CoA and (11E)-octadecenoyl-CoA (trans-vaccenoyl-CoA), the monounsaturated fatty acids (MUFAs) produced are further used by several other desaturases and elongases as substrates to synthesize polyunsaturated fatty acids (PUFAs) endogenously (PUFAs are essential for membrane structure and many cellular and physiological processes). Unlike plants, Caenorhabditis elegans desaturases seem to use fatty acyl-CoAs as substrates. Partially inhibits expression of genes involved in beta-oxidation, such as ech-1 and acs-2, perhaps signaling via the actions of one of its fatty acid products. May form part of a negative feedback loop with the transcription factor nhr-49 to limit beta-oxidation, in which nhr-49 stimulates expression of fat-7 and acs-2, and in turn fat-7 indirectly inhibits acs-2 and other genes also involved in beta-oxidation. This is Delta(9)-fatty-acid desaturase fat-7 (fat-7) from Caenorhabditis elegans.